Here is a 538-residue protein sequence, read N- to C-terminus: C-22 sterol desaturase ERG5 (538 aa).

The chain crosses the membrane as a helical span at residues 46–66 (LKIFATLICILLVWDQVAYQI). Residues lysine 164 and lysine 198 each participate in a glycyl lysine isopeptide (Lys-Gly) (interchain with G-Cter in ubiquitin) cross-link. Position 476 (cysteine 476) interacts with heme.

The protein belongs to the cytochrome P450 family. As to quaternary structure, interacts with ERG28. Heme serves as cofactor.

It is found in the endoplasmic reticulum membrane. It carries out the reaction 5-dehydroepisterol + NADPH + O2 + H(+) = ergosta-5,7,22,24(28)-tetraen-3beta-ol + NADP(+) + 2 H2O. It functions in the pathway steroid metabolism; ergosterol biosynthesis; ergosterol from zymosterol: step 4/5. Its function is as follows. C-22 sterol desaturase; part of the third module of ergosterol biosynthesis pathway that includes the late steps of the pathway. ERG5 converts 5-dehydroepisterol into ergosta-5,7,22,24(28)-tetraen-3beta-ol by forming the C-22(23) double bond in the sterol side chain. The third module or late pathway involves the ergosterol synthesis itself through consecutive reactions that mainly occur in the endoplasmic reticulum (ER) membrane. Firstly, the squalene synthase ERG9 catalyzes the condensation of 2 farnesyl pyrophosphate moieties to form squalene, which is the precursor of all steroids. Squalene synthase is crucial for balancing the incorporation of farnesyl diphosphate (FPP) into sterol and nonsterol isoprene synthesis. Secondly, the squalene epoxidase ERG1 catalyzes the stereospecific oxidation of squalene to (S)-2,3-epoxysqualene, which is considered to be a rate-limiting enzyme in steroid biosynthesis. Then, the lanosterol synthase ERG7 catalyzes the cyclization of (S)-2,3 oxidosqualene to lanosterol, a reaction that forms the sterol core. In the next steps, lanosterol is transformed to zymosterol through a complex process involving various demethylation, reduction and desaturation reactions. The lanosterol 14-alpha-demethylase ERG11 (also known as CYP51) catalyzes C14-demethylation of lanosterol to produce 4,4'-dimethyl cholesta-8,14,24-triene-3-beta-ol, which is critical for ergosterol biosynthesis. The C-14 reductase ERG24 reduces the C14=C15 double bond of 4,4-dimethyl-cholesta-8,14,24-trienol to produce 4,4-dimethyl-cholesta-8,24-dienol. 4,4-dimethyl-cholesta-8,24-dienol is substrate of the C-4 demethylation complex ERG25-ERG26-ERG27 in which ERG25 catalyzes the three-step monooxygenation required for the demethylation of 4,4-dimethyl and 4alpha-methylsterols, ERG26 catalyzes the oxidative decarboxylation that results in a reduction of the 3-beta-hydroxy group at the C-3 carbon to an oxo group, and ERG27 is responsible for the reduction of the keto group on the C-3. ERG28 has a role as a scaffold to help anchor ERG25, ERG26 and ERG27 to the endoplasmic reticulum and ERG29 regulates the activity of the iron-containing C4-methylsterol oxidase ERG25. Then, the sterol 24-C-methyltransferase ERG6 catalyzes the methyl transfer from S-adenosyl-methionine to the C-24 of zymosterol to form fecosterol. The C-8 sterol isomerase ERG2 catalyzes the reaction which results in unsaturation at C-7 in the B ring of sterols and thus converts fecosterol to episterol. The sterol-C5-desaturase ERG3 then catalyzes the introduction of a C-5 double bond in the B ring to produce 5-dehydroepisterol. The C-22 sterol desaturase ERG5 further converts 5-dehydroepisterol into ergosta-5,7,22,24(28)-tetraen-3beta-ol by forming the C-22(23) double bond in the sterol side chain. Finally, ergosta-5,7,22,24(28)-tetraen-3beta-ol is substrate of the C-24(28) sterol reductase ERG4 to produce ergosterol. In Saccharomyces cerevisiae (strain ATCC 204508 / S288c) (Baker's yeast), this protein is C-22 sterol desaturase ERG5.